Reading from the N-terminus, the 493-residue chain is ATP synthase subunit beta, chloroplastic (493 aa).

170 to 177 (GGAGVGKT) lines the ATP pocket.

Belongs to the ATPase alpha/beta chains family. F-type ATPases have 2 components, CF(1) - the catalytic core - and CF(0) - the membrane proton channel. CF(1) has five subunits: alpha(3), beta(3), gamma(1), delta(1), epsilon(1). CF(0) has four main subunits: a(1), b(1), b'(1) and c(9-12).

The protein localises to the plastid. It is found in the chloroplast thylakoid membrane. The enzyme catalyses ATP + H2O + 4 H(+)(in) = ADP + phosphate + 5 H(+)(out). Its function is as follows. Produces ATP from ADP in the presence of a proton gradient across the membrane. The catalytic sites are hosted primarily by the beta subunits. The polypeptide is ATP synthase subunit beta, chloroplastic (Chaetosphaeridium globosum (Charophycean green alga)).